Here is a 167-residue protein sequence, read N- to C-terminus: Myelin basic protein (167 aa).

Residue Ala-1 is modified to N-acetylalanine. Residues Ser-7 and Ser-12 each carry the phosphoserine modification. A Phosphotyrosine modification is found at Tyr-14. Thr-17 is modified (phosphothreonine). Ser-19 carries the phosphoserine modification. Phosphothreonine is present on Thr-20. Citrulline occurs at positions 25 and 31. Phosphothreonine is present on Thr-35. Residue Ser-40 is modified to Phosphoserine. Arg-43 and Arg-49 each carry omega-N-methylarginine. The interval 45 to 87 (FGSDRAAPKRGSGKDSHHAARTTHYGSLPQKSQRSQDENPVVH) is induces experimental autoimmune encephalomyelitis (EAE) 1. The tract at residues 46 to 114 (GSDRAAPKRG…GRGLSLSRFS (69 aa)) is disordered. Ser-56 carries the phosphoserine modification. Thr-67 is subject to Phosphothreonine. At Tyr-69 the chain carries Phosphotyrosine. At Ser-76 the chain carries Phosphoserine. Residues Thr-94 and Thr-97 each carry the phosphothreonine modification. Residue Gln-102 is modified to Deamidated glutamine. The residue at position 106 (Arg-106) is an Omega-N-methylarginine; alternate. At Arg-106 the chain carries Symmetric dimethylarginine; alternate. Ser-114 is modified (phosphoserine). The induces experimental autoimmune encephalomyelitis (EAE) 2 stretch occupies residues 114 to 122 (SWGAEGQKP). Residue Lys-121 is modified to N6-acetyllysine. The residue at position 129 (Arg-129) is a Citrulline. The disordered stretch occupies residues 136–167 (GFKGAHDAQGTLSKIFKLGGRDSRSGSPMARR). Residue Gln-144 is modified to Deamidated glutamine. The residue at position 156 (Arg-156) is a Citrulline. At Ser-158 the chain carries Phosphoserine. Ser-162 carries the post-translational modification Phosphoserine; by UHMK1. Citrulline is present on Arg-167.

This sequence belongs to the myelin basic protein family. In terms of assembly, homodimer. Post-translationally, at least 5 charge isomers; C1 (the most cationic, least modified, and most abundant form), C2, C3, C4 and C5 (the least cationic form); are produced as a result of optional post-translational modifications such as phosphorylation of serine or threonine residues, deamidation of glutamine or asparagine residues, citrullination and methylation of arginine residues. C1 and C2 are unphosphorylated, C3 and C4 are monophosphorylated and C5 is phosphorylated at two positions. Phosphorylated by TAOK2, VRK2, MAPK11, MAPK12, MAPK14 and MINK1. In terms of processing, proteolytically cleaved in B cell lysosomes by cathepsin CTSG which degrades the major immunogenic MBP epitope and prevents the activation of MBP-specific autoreactive T cells. In terms of tissue distribution, found in both the central and the peripheral nervous system.

The protein localises to the myelin membrane. In terms of biological role, is, with PLP, the most abundant protein component of the myelin membrane in the CNS. Has a role in both the formation and stabilization of this compact multilayer arrangement of bilayers. Each splice variant and charge isomer may have a specialized function in the assembly of an optimized, biochemically functional myelin membrane. This is Myelin basic protein (MBP) from Cavia porcellus (Guinea pig).